The primary structure comprises 68 residues: Small ribosomal subunit protein bS21 (68 aa).

The segment covering 37-49 (EKPSEKRAREKAA) has biased composition (basic and acidic residues). A disordered region spans residues 37–68 (EKPSEKRAREKAAAVRRARKMERKRMERDGIK). The segment covering 50-59 (AVRRARKMER) has biased composition (basic residues).

The protein belongs to the bacterial ribosomal protein bS21 family.

This Erythrobacter litoralis (strain HTCC2594) protein is Small ribosomal subunit protein bS21.